Reading from the N-terminus, the 141-residue chain is Nucleoside diphosphate kinase (141 aa).

ATP contacts are provided by Lys-9, Phe-57, Arg-85, Thr-91, Arg-102, and Asn-112. His-115 functions as the Pros-phosphohistidine intermediate in the catalytic mechanism.

This sequence belongs to the NDK family. Homotetramer. It depends on Mg(2+) as a cofactor.

It is found in the cytoplasm. The enzyme catalyses a 2'-deoxyribonucleoside 5'-diphosphate + ATP = a 2'-deoxyribonucleoside 5'-triphosphate + ADP. It carries out the reaction a ribonucleoside 5'-diphosphate + ATP = a ribonucleoside 5'-triphosphate + ADP. Functionally, major role in the synthesis of nucleoside triphosphates other than ATP. The ATP gamma phosphate is transferred to the NDP beta phosphate via a ping-pong mechanism, using a phosphorylated active-site intermediate. The chain is Nucleoside diphosphate kinase from Chlamydia caviae (strain ATCC VR-813 / DSM 19441 / 03DC25 / GPIC) (Chlamydophila caviae).